We begin with the raw amino-acid sequence, 82 residues long: ATP synthase subunit c (82 aa).

2 helical membrane-spanning segments follow: residues 7–27 and 53–73; these read FVAL…CIGI and FLLA…AMMF.

Belongs to the ATPase C chain family. As to quaternary structure, F-type ATPases have 2 components, F(1) - the catalytic core - and F(0) - the membrane proton channel. F(1) has five subunits: alpha(3), beta(3), gamma(1), delta(1), epsilon(1). F(0) has three main subunits: a(1), b(2) and c(10-14). The alpha and beta chains form an alternating ring which encloses part of the gamma chain. F(1) is attached to F(0) by a central stalk formed by the gamma and epsilon chains, while a peripheral stalk is formed by the delta and b chains.

It is found in the cell inner membrane. Functionally, f(1)F(0) ATP synthase produces ATP from ADP in the presence of a proton or sodium gradient. F-type ATPases consist of two structural domains, F(1) containing the extramembraneous catalytic core and F(0) containing the membrane proton channel, linked together by a central stalk and a peripheral stalk. During catalysis, ATP synthesis in the catalytic domain of F(1) is coupled via a rotary mechanism of the central stalk subunits to proton translocation. Key component of the F(0) channel; it plays a direct role in translocation across the membrane. A homomeric c-ring of between 10-14 subunits forms the central stalk rotor element with the F(1) delta and epsilon subunits. This chain is ATP synthase subunit c, found in Aromatoleum aromaticum (strain DSM 19018 / LMG 30748 / EbN1) (Azoarcus sp. (strain EbN1)).